Here is a 445-residue protein sequence, read N- to C-terminus: Tubulin beta-1 chain (445 aa).

Glutamine 11, glutamate 69, serine 138, glycine 142, threonine 143, glycine 144, asparagine 204, and asparagine 226 together coordinate GTP. Mg(2+) is bound at residue glutamate 69. The tract at residues 426–445 is disordered; it reads QDATAEDEEEYEDEEEEMAA. The span at 429-445 shows a compositional bias: acidic residues; that stretch reads TAEDEEEYEDEEEEMAA.

The protein belongs to the tubulin family. As to quaternary structure, dimer of alpha and beta chains. A typical microtubule is a hollow water-filled tube with an outer diameter of 25 nm and an inner diameter of 15 nM. Alpha-beta heterodimers associate head-to-tail to form protofilaments running lengthwise along the microtubule wall with the beta-tubulin subunit facing the microtubule plus end conferring a structural polarity. Microtubules usually have 13 protofilaments but different protofilament numbers can be found in some organisms and specialized cells. Requires Mg(2+) as cofactor.

The protein resides in the cytoplasm. It localises to the cytoskeleton. Tubulin is the major constituent of microtubules, a cylinder consisting of laterally associated linear protofilaments composed of alpha- and beta-tubulin heterodimers. Microtubules grow by the addition of GTP-tubulin dimers to the microtubule end, where a stabilizing cap forms. Below the cap, tubulin dimers are in GDP-bound state, owing to GTPase activity of alpha-tubulin. The chain is Tubulin beta-1 chain (TUBB1) from Eleusine indica (Goosegrass).